The sequence spans 319 residues: Beta-ketoacyl-[acyl-carrier-protein] synthase III (319 aa).

Residues cysteine 115 and histidine 246 contribute to the active site. The ACP-binding stretch occupies residues 247–251 (QANLR). Asparagine 276 is an active-site residue.

The protein belongs to the thiolase-like superfamily. FabH family. Homodimer.

It localises to the cytoplasm. The catalysed reaction is malonyl-[ACP] + acetyl-CoA + H(+) = 3-oxobutanoyl-[ACP] + CO2 + CoA. The protein operates within lipid metabolism; fatty acid biosynthesis. Catalyzes the condensation reaction of fatty acid synthesis by the addition to an acyl acceptor of two carbons from malonyl-ACP. Catalyzes the first condensation reaction which initiates fatty acid synthesis and may therefore play a role in governing the total rate of fatty acid production. Possesses both acetoacetyl-ACP synthase and acetyl transacylase activities. Its substrate specificity determines the biosynthesis of branched-chain and/or straight-chain of fatty acids. This Coxiella burnetii (strain CbuK_Q154) (Coxiella burnetii (strain Q154)) protein is Beta-ketoacyl-[acyl-carrier-protein] synthase III.